A 609-amino-acid chain; its full sequence is Membrane protein insertase YidC (609 aa).

5 helical membrane passes run 8–28 (LILA…LFPP), 381–401 (MGWS…PLAL), 451–471 (LPIL…FVTI), 509–529 (SLTA…SMWL), and 545–565 (IFAW…SGLV).

Belongs to the OXA1/ALB3/YidC family. Type 1 subfamily. In terms of assembly, interacts with the Sec translocase complex via SecD. Specifically interacts with transmembrane segments of nascent integral membrane proteins during membrane integration.

It localises to the cell inner membrane. Required for the insertion and/or proper folding and/or complex formation of integral membrane proteins into the membrane. Involved in integration of membrane proteins that insert both dependently and independently of the Sec translocase complex, as well as at least some lipoproteins. Aids folding of multispanning membrane proteins. The polypeptide is Membrane protein insertase YidC (Ruegeria pomeroyi (strain ATCC 700808 / DSM 15171 / DSS-3) (Silicibacter pomeroyi)).